Consider the following 359-residue polypeptide: Anhydro-N-acetylmuramic acid kinase (359 aa).

12–19 (GTSLDGVD) is an ATP binding site.

Belongs to the anhydro-N-acetylmuramic acid kinase family.

The catalysed reaction is 1,6-anhydro-N-acetyl-beta-muramate + ATP + H2O = N-acetyl-D-muramate 6-phosphate + ADP + H(+). The protein operates within amino-sugar metabolism; 1,6-anhydro-N-acetylmuramate degradation. It participates in cell wall biogenesis; peptidoglycan recycling. Functionally, catalyzes the specific phosphorylation of 1,6-anhydro-N-acetylmuramic acid (anhMurNAc) with the simultaneous cleavage of the 1,6-anhydro ring, generating MurNAc-6-P. Is required for the utilization of anhMurNAc either imported from the medium or derived from its own cell wall murein, and thus plays a role in cell wall recycling. The chain is Anhydro-N-acetylmuramic acid kinase from Sulfurovum sp. (strain NBC37-1).